The sequence spans 445 residues: tRNA modification GTPase MnmE (445 aa).

(6S)-5-formyl-5,6,7,8-tetrahydrofolate is bound by residues arginine 20, glutamate 79, and lysine 119. The 157-residue stretch at 215–371 (GLKLAIVGPP…ILKNIENIAE (157 aa)) folds into the TrmE-type G domain. Position 225 (asparagine 225) interacts with K(+). GTP contacts are provided by residues 225-230 (NTGKSS), 244-250 (SNIAGTT), and 269-272 (DTAG). A Mg(2+)-binding site is contributed by serine 229. 3 residues coordinate K(+): serine 244, isoleucine 246, and threonine 249. Threonine 250 is a Mg(2+) binding site. Lysine 445 is a binding site for (6S)-5-formyl-5,6,7,8-tetrahydrofolate.

It belongs to the TRAFAC class TrmE-Era-EngA-EngB-Septin-like GTPase superfamily. TrmE GTPase family. In terms of assembly, homodimer. Heterotetramer of two MnmE and two MnmG subunits. K(+) serves as cofactor.

It is found in the cytoplasm. Its function is as follows. Exhibits a very high intrinsic GTPase hydrolysis rate. Involved in the addition of a carboxymethylaminomethyl (cmnm) group at the wobble position (U34) of certain tRNAs, forming tRNA-cmnm(5)s(2)U34. The sequence is that of tRNA modification GTPase MnmE from Rickettsia akari (strain Hartford).